Here is a 347-residue protein sequence, read N- to C-terminus: Dihydroorotase (347 aa).

Zn(2+)-binding residues include histidine 14 and histidine 16. Substrate contacts are provided by residues 16-18 (HLR) and asparagine 42. Zn(2+) contacts are provided by lysine 100, histidine 137, and histidine 175. An N6-carboxylysine modification is found at lysine 100. Position 137 (histidine 137) interacts with substrate. Substrate is bound at residue leucine 220. Residue aspartate 248 coordinates Zn(2+). The active site involves aspartate 248. Residues histidine 252 and alanine 264 each coordinate substrate.

Belongs to the metallo-dependent hydrolases superfamily. DHOase family. Class II DHOase subfamily. Homodimer. The cofactor is Zn(2+).

The catalysed reaction is (S)-dihydroorotate + H2O = N-carbamoyl-L-aspartate + H(+). Its pathway is pyrimidine metabolism; UMP biosynthesis via de novo pathway; (S)-dihydroorotate from bicarbonate: step 3/3. Functionally, catalyzes the reversible cyclization of carbamoyl aspartate to dihydroorotate. The chain is Dihydroorotase from Pseudomonas syringae pv. syringae (strain B728a).